Here is a 224-residue protein sequence, read N- to C-terminus: Small ribosomal subunit protein uS3 (224 aa).

The KH type-2 domain maps to 39–107; it reads IREFLKKKPS…DVWVEIAEVK (69 aa).

It belongs to the universal ribosomal protein uS3 family. Part of the 30S ribosomal subunit. Forms a tight complex with proteins S10 and S14.

In terms of biological role, binds the lower part of the 30S subunit head. Binds mRNA in the 70S ribosome, positioning it for translation. This is Small ribosomal subunit protein uS3 from Chlamydia trachomatis serovar A (strain ATCC VR-571B / DSM 19440 / HAR-13).